We begin with the raw amino-acid sequence, 236 residues long: Purine nucleoside phosphorylase DeoD-type 2 (236 aa).

His-5 contributes to the a purine D-ribonucleoside binding site. Residues Gly-21, Arg-25, Arg-44, and 88-91 (RIGS) each bind phosphate. Residues 180 to 182 (DME) and 204 to 205 (SD) contribute to the a purine D-ribonucleoside site. Asp-205 functions as the Proton donor in the catalytic mechanism.

This sequence belongs to the PNP/UDP phosphorylase family. Homohexamer; trimer of homodimers.

It carries out the reaction a purine D-ribonucleoside + phosphate = a purine nucleobase + alpha-D-ribose 1-phosphate. The catalysed reaction is a purine 2'-deoxy-D-ribonucleoside + phosphate = a purine nucleobase + 2-deoxy-alpha-D-ribose 1-phosphate. Its function is as follows. Catalyzes the reversible phosphorolytic breakdown of the N-glycosidic bond in the beta-(deoxy)ribonucleoside molecules, with the formation of the corresponding free purine bases and pentose-1-phosphate. This Vibrio cholerae serotype O1 (strain ATCC 39315 / El Tor Inaba N16961) protein is Purine nucleoside phosphorylase DeoD-type 2.